A 538-amino-acid polypeptide reads, in one-letter code: Cytochrome P450 monooxygenase okaG (538 aa).

A helical transmembrane segment spans residues 3–23; it reads LISPLAAVLSAMAIVLGLLFF. Cys-484 contacts heme.

This sequence belongs to the cytochrome P450 family. Requires heme as cofactor.

Its subcellular location is the membrane. The catalysed reaction is 12-deshydroxyl okaramine E + 2 reduced [NADPH--hemoprotein reductase] + 2 O2 = 3-desmethyl okaramine B + 2 oxidized [NADPH--hemoprotein reductase] + 2 H2O + 2 H(+). Its pathway is alkaloid biosynthesis. Its function is as follows. Nonribosomal peptide synthetase; part of the gene cluster that mediates the biosynthesis of okaramine B, a prenylated indole alkaloid that possesses an unusual octacyclic ring system, including a four-membered azetidine ring and an eight-membered azocine ring, and that exhibits insecticidal activity against silkworm larvae. Within the pathway, okaG acts as a 2,3-diol synthase that installs 2,3-diol on the okaramine scaffold to convert 12-deshydroxyl okaramine E into 3-desmethyl okaramine B. OkaG is also able to produce use okaramine E and produce okaramine D with the help of the methyltransferase okaF. The biosynthesis begins with the NRPS okaA that condenses two tryptophan molecules into cyclo(L-Trp-L-Trp). Prenylation by the prenyltransferase okaC then leads to the formation of cyclo(N8-(alpha,alpha-dimethylallyl)-L-Trp-6a-(alpha,alpha-dime-thylallyl)-L-Trp). This is followed by indole 2,3-epoxidation by the FAD-dependent monooxygenase okaB to facilitate the formation of the hexahydropyrrolo[2,3-b]indole (HPI) moiety of okaramine C. The cytochrome P450 monooxygenase okaD then likely catalyzes formation of the eight-membered ring of okaramine A. The dioxygenase okaE further forms the unusual 2-dimethyl-3-methyl-azetidine ring to yield 12-deshydroxyl okaramine E, as well as the hydroxylation of 12-deshydroxyl okaramine E to produce okaramine E. The cytochrome P450 monoxygenase okaG converts 12-deshydroxyl okaramine E into 3-desmethyl okaramine B which is further methylated by the methyltransferase okaF into okaramine B. In a shunt pathway, okaG and okaF together are also able to convert okaramine E into okaramine D. Okaramine H is produced by nonenzymatic conversion from okaramine A. The sequence is that of Cytochrome P450 monooxygenase okaG from Penicillium ochrochloron.